The primary structure comprises 364 residues: tRNA (adenine(58)-N(1))-methyltransferase catalytic subunit trm61 (364 aa).

Residues 114-116 (SAS), Glu-135, Arg-140, 167-168 (DV), and Asp-186 each bind S-adenosyl-L-methionine. The tract at residues 280–309 (EQNLSSDAKVEDQDNDSMLGENKSSVSTET) is disordered.

Belongs to the class I-like SAM-binding methyltransferase superfamily. TRM61 family. As to quaternary structure, heterotetramer; composed of two copies of TRM6 and two copies of TRM61.

The protein localises to the nucleus. It carries out the reaction adenosine(58) in tRNA + S-adenosyl-L-methionine = N(1)-methyladenosine(58) in tRNA + S-adenosyl-L-homocysteine + H(+). Catalytic subunit of tRNA (adenine-N(1)-)-methyltransferase, which catalyzes the formation of N(1)-methyladenine at position 58 (m1A58) in initiator methionyl-tRNA. In Schizosaccharomyces pombe (strain 972 / ATCC 24843) (Fission yeast), this protein is tRNA (adenine(58)-N(1))-methyltransferase catalytic subunit trm61 (cpd1).